The sequence spans 176 residues: Macro domain-containing protein mll7730 (176 aa).

Positions 1 to 174 (MSKALDRIRI…LYLRAVAALR (174 aa)) constitute a Macro domain.

It belongs to the MacroD-type family.

The protein is Macro domain-containing protein mll7730 of Mesorhizobium japonicum (strain LMG 29417 / CECT 9101 / MAFF 303099) (Mesorhizobium loti (strain MAFF 303099)).